We begin with the raw amino-acid sequence, 429 residues long: Chaperone SurA (429 aa).

An N-terminal signal peptide occupies residues Met-1–Ala-18. PpiC domains lie at Asn-170–Ala-271 and Ile-281–Ala-380.

It is found in the periplasm. The catalysed reaction is [protein]-peptidylproline (omega=180) = [protein]-peptidylproline (omega=0). In terms of biological role, chaperone involved in the correct folding and assembly of outer membrane proteins. Recognizes specific patterns of aromatic residues and the orientation of their side chains, which are found more frequently in integral outer membrane proteins. May act in both early periplasmic and late outer membrane-associated steps of protein maturation. This Legionella pneumophila (strain Paris) protein is Chaperone SurA.